Here is a 141-residue protein sequence, read N- to C-terminus: Large ribosomal subunit protein uL14 (141 aa).

Belongs to the universal ribosomal protein uL14 family. Part of the 50S ribosomal subunit. Forms a cluster with proteins L3 and L24e, part of which may contact the 16S rRNA in 2 intersubunit bridges.

Binds to 23S rRNA. Forms part of two intersubunit bridges in the 70S ribosome. This is Large ribosomal subunit protein uL14 from Pyrococcus horikoshii (strain ATCC 700860 / DSM 12428 / JCM 9974 / NBRC 100139 / OT-3).